A 322-amino-acid chain; its full sequence is MSKPVRVEPGVKMRDADKMALIPVQIIPTERDQMLRKPSWLKVKLPSSTERIDEIKQAMRSHGLHSVCEEASCPNLPECFNHGTASFMILGDICTRRCPFCDVAHGRPLPPDPEEAEKLGKTIRDMKVKYVVITSVDRDDLRDGGAQHFADCIREIREHSENNIQVEVLVPDFRGRMQVAIDILKGEAPDVFNHNLETVPRLYKAARPGANYQWSLDLLQKYKEVRPDIRTKSGLMVGLGETKEEILEVMKDLRAHDVDMLTIGQYLQPSRHHIPVARYVHPDEFEELRVAGVEMGFSHIASGPLVRSSYHADLQAAGETVR.

The [4Fe-4S] cluster site is built by C68, C73, C79, C94, C98, C101, and S309. One can recognise a Radical SAM core domain in the interval 80–298 (FNHGTASFMI…RVAGVEMGFS (219 aa)).

Belongs to the radical SAM superfamily. Lipoyl synthase family. [4Fe-4S] cluster is required as a cofactor.

It localises to the cytoplasm. It catalyses the reaction [[Fe-S] cluster scaffold protein carrying a second [4Fe-4S](2+) cluster] + N(6)-octanoyl-L-lysyl-[protein] + 2 oxidized [2Fe-2S]-[ferredoxin] + 2 S-adenosyl-L-methionine + 4 H(+) = [[Fe-S] cluster scaffold protein] + N(6)-[(R)-dihydrolipoyl]-L-lysyl-[protein] + 4 Fe(3+) + 2 hydrogen sulfide + 2 5'-deoxyadenosine + 2 L-methionine + 2 reduced [2Fe-2S]-[ferredoxin]. Its pathway is protein modification; protein lipoylation via endogenous pathway; protein N(6)-(lipoyl)lysine from octanoyl-[acyl-carrier-protein]: step 2/2. Functionally, catalyzes the radical-mediated insertion of two sulfur atoms into the C-6 and C-8 positions of the octanoyl moiety bound to the lipoyl domains of lipoate-dependent enzymes, thereby converting the octanoylated domains into lipoylated derivatives. In Idiomarina loihiensis (strain ATCC BAA-735 / DSM 15497 / L2-TR), this protein is Lipoyl synthase.